The primary structure comprises 61 residues: Small ribosomal subunit protein uS14 (61 aa).

Zn(2+) contacts are provided by Cys-24, Cys-27, Cys-40, and Cys-43.

Belongs to the universal ribosomal protein uS14 family. Zinc-binding uS14 subfamily. Part of the 30S ribosomal subunit. Contacts proteins S3 and S10. The cofactor is Zn(2+).

Its function is as follows. Binds 16S rRNA, required for the assembly of 30S particles and may also be responsible for determining the conformation of the 16S rRNA at the A site. In Desulfosudis oleivorans (strain DSM 6200 / JCM 39069 / Hxd3) (Desulfococcus oleovorans), this protein is Small ribosomal subunit protein uS14.